Here is a 210-residue protein sequence, read N- to C-terminus: MTLHLQAAGLACERDWRLLFEQLDFELGAGDMLQISGPNGSGKTSLLRLLAGLMQPTAGQILLGGKPLAEQRHALASALLWIGHAAGIKDLLTAEENLTWLCALHQPASREAIWAALEAVGLRGFEDVPCHTLSAGQQRRVALARLHLACPPLWILDEPFTALDKQGVAQLEAHLAAHCEQGGTVVLTTHHTLERKPSGYRELNLGQWAA.

In terms of domain architecture, ABC transporter spans 3–205 (LHLQAAGLAC…KPSGYRELNL (203 aa)). 37–44 (GPNGSGKT) contacts ATP.

Belongs to the ABC transporter superfamily. CcmA exporter (TC 3.A.1.107) family. In terms of assembly, the complex is composed of two ATP-binding proteins (CcmA) and two transmembrane proteins (CcmB).

The protein localises to the cell inner membrane. The enzyme catalyses heme b(in) + ATP + H2O = heme b(out) + ADP + phosphate + H(+). In terms of biological role, part of the ABC transporter complex CcmAB involved in the biogenesis of c-type cytochromes; once thought to export heme, this seems not to be the case, but its exact role is uncertain. Responsible for energy coupling to the transport system. The polypeptide is Cytochrome c biogenesis ATP-binding export protein CcmA (Pseudomonas putida (strain ATCC 47054 / DSM 6125 / CFBP 8728 / NCIMB 11950 / KT2440)).